A 237-amino-acid polypeptide reads, in one-letter code: Periplasmic deoxyribonuclease (237 aa).

A signal peptide spans methionine 1–alanine 27.

Belongs to the EndA/NucM nuclease family.

It localises to the periplasm. Functionally, endonuclease which is capable of degrading plasmid DNA. This is Periplasmic deoxyribonuclease (dnsH) from Aeromonas hydrophila.